The primary structure comprises 318 residues: Protein LplB (318 aa).

The next 6 membrane-spanning stretches (helical) occupy residues 35–55 (LIPG…GVLI), 94–114 (LMLA…LALL), 130–150 (FIYV…FVFF), 182–202 (IVMQ…LAAL), 236–256 (IIVL…EQVY), and 289–309 (AVGL…NYIA). The ABC transmembrane type-1 domain maps to 90–305 (LRNTLMLASL…VVGIILIFGA (216 aa)).

This sequence belongs to the binding-protein-dependent transport system permease family. MalFG subfamily.

Its subcellular location is the cell membrane. The chain is Protein LplB (lplB) from Bacillus subtilis (strain 168).